A 712-amino-acid polypeptide reads, in one-letter code: Ribosome-releasing factor 2, mitochondrial (712 aa).

A mitochondrion-targeting transit peptide spans Met-1–Tyr-29. One can recognise a tr-type G domain in the interval Ser-31–Glu-310. GTP is bound by residues Ala-40 to Thr-47, Asp-104 to His-108, and Asn-158 to Asp-161.

The protein belongs to the TRAFAC class translation factor GTPase superfamily. Classic translation factor GTPase family. EF-G/EF-2 subfamily.

It is found in the mitochondrion. Functionally, mitochondrial GTPase that mediates the disassembly of ribosomes from messenger RNA at the termination of mitochondrial protein biosynthesis. Not involved in the GTP-dependent ribosomal translocation step during translation elongation. The polypeptide is Ribosome-releasing factor 2, mitochondrial (Drosophila yakuba (Fruit fly)).